The sequence spans 180 residues: NADH-quinone oxidoreductase subunit I (180 aa).

4Fe-4S ferredoxin-type domains follow at residues 48-80 (IVLTRDPDGDERCVACNLCAVACPVGCISLQKA) and 90-119 (EFFRINFSRCIFCGLCEEACPTTAIQLTPD). [4Fe-4S] cluster-binding residues include C60, C63, C66, C70, C99, C102, C105, and C109. Residues 160–180 (GKPKGSAQKEAAPIDVKSILP) form a disordered region.

Belongs to the complex I 23 kDa subunit family. NDH-1 is composed of 14 different subunits. Subunits NuoA, H, J, K, L, M, N constitute the membrane sector of the complex. The cofactor is [4Fe-4S] cluster.

It localises to the cell inner membrane. It carries out the reaction a quinone + NADH + 5 H(+)(in) = a quinol + NAD(+) + 4 H(+)(out). NDH-1 shuttles electrons from NADH, via FMN and iron-sulfur (Fe-S) centers, to quinones in the respiratory chain. The immediate electron acceptor for the enzyme in this species is believed to be ubiquinone. Couples the redox reaction to proton translocation (for every two electrons transferred, four hydrogen ions are translocated across the cytoplasmic membrane), and thus conserves the redox energy in a proton gradient. The polypeptide is NADH-quinone oxidoreductase subunit I (Tolumonas auensis (strain DSM 9187 / NBRC 110442 / TA 4)).